The primary structure comprises 167 residues: Ribosome maturation factor RimM (167 aa).

A PRC barrel domain is found at 94-166 (QNRAWLHELE…YIVVPRFDEF (73 aa)).

It belongs to the RimM family. As to quaternary structure, binds ribosomal protein uS19.

It localises to the cytoplasm. Its function is as follows. An accessory protein needed during the final step in the assembly of 30S ribosomal subunit, possibly for assembly of the head region. Essential for efficient processing of 16S rRNA. May be needed both before and after RbfA during the maturation of 16S rRNA. It has affinity for free ribosomal 30S subunits but not for 70S ribosomes. The polypeptide is Ribosome maturation factor RimM (Chlorobium phaeovibrioides (strain DSM 265 / 1930) (Prosthecochloris vibrioformis (strain DSM 265))).